A 376-amino-acid chain; its full sequence is Chaperone protein DnaJ 2 (376 aa).

A J domain is found at 5–70; sequence DYYEVLGVNR…QKRAAYDRYG (66 aa). A CR-type zinc finger spans residues 135-213; the sequence is GADKTIRIPT…CGGAGRVKRQ (79 aa). Residues cysteine 148, cysteine 151, cysteine 165, cysteine 168, cysteine 187, cysteine 190, cysteine 201, and cysteine 204 each contribute to the Zn(2+) site. CXXCXGXG motif repeat units lie at residues 148 to 155, 165 to 172, 187 to 194, and 201 to 208; these read CETCHGSG, CPTCGGAG, CPKCHGTG, and CRDCGGAG.

This sequence belongs to the DnaJ family. As to quaternary structure, homodimer. Requires Zn(2+) as cofactor.

Its subcellular location is the cytoplasm. Functionally, participates actively in the response to hyperosmotic and heat shock by preventing the aggregation of stress-denatured proteins and by disaggregating proteins, also in an autonomous, DnaK-independent fashion. Unfolded proteins bind initially to DnaJ; upon interaction with the DnaJ-bound protein, DnaK hydrolyzes its bound ATP, resulting in the formation of a stable complex. GrpE releases ADP from DnaK; ATP binding to DnaK triggers the release of the substrate protein, thus completing the reaction cycle. Several rounds of ATP-dependent interactions between DnaJ, DnaK and GrpE are required for fully efficient folding. Also involved, together with DnaK and GrpE, in the DNA replication of plasmids through activation of initiation proteins. The protein is Chaperone protein DnaJ 2 of Aromatoleum aromaticum (strain DSM 19018 / LMG 30748 / EbN1) (Azoarcus sp. (strain EbN1)).